The following is a 316-amino-acid chain: Transaldolase (316 aa).

The Schiff-base intermediate with substrate role is filled by Lys132.

Belongs to the transaldolase family. Type 1 subfamily. Homodimer.

It is found in the cytoplasm. The enzyme catalyses D-sedoheptulose 7-phosphate + D-glyceraldehyde 3-phosphate = D-erythrose 4-phosphate + beta-D-fructose 6-phosphate. Its pathway is carbohydrate degradation; pentose phosphate pathway; D-glyceraldehyde 3-phosphate and beta-D-fructose 6-phosphate from D-ribose 5-phosphate and D-xylulose 5-phosphate (non-oxidative stage): step 2/3. Functionally, transaldolase is important for the balance of metabolites in the pentose-phosphate pathway. The sequence is that of Transaldolase from Vibrio parahaemolyticus serotype O3:K6 (strain RIMD 2210633).